A 1345-amino-acid polypeptide reads, in one-letter code: Vascular endothelial growth factor receptor 2 (1345 aa).

Positions 1-19 are cleaved as a signal peptide; the sequence is MESKALLAVALWFCVETRA. At 20 to 762 the chain is on the extracellular side; that stretch reads ASVGLPGDFL…EGAQEKTNLE (743 aa). 5 N-linked (GlcNAc...) asparagine glycosylation sites follow: N46, N98, N145, N160, and N247. Ig-like C2-type domains are found at residues 46–111, 143–209, 226–325, 330–416, 423–542, 549–656, and 665–751; these read NTTL…RDVD, NKNK…INDE, YDVI…TFVR, PFIA…HMVS, PQIG…RVIS, PEIT…LVKQ, and PMIT…TLFI. A disulfide bond links C53 and C105. C152 and C202 form a disulfide bridge. C248 and C309 form a disulfide bridge. N-linked (GlcNAc...) asparagine glycosylation is found at N320, N376, N397, N509, N521, N578, N611, N617, N629, N673, N702, and N719. 2 disulfides stabilise this stretch: C447–C528 and C569–C640. A disulfide bridge links C686 with C735. Residues 763–783 form a helical membrane-spanning segment; sequence VIILVGTAVIAMFFWLLLVIV. The Cytoplasmic portion of the chain corresponds to 784 to 1345; it reads LRTVKRANEG…SGTTLRSPPV (562 aa). Phosphotyrosine is present on Y799. The Protein kinase domain maps to 832 to 1160; that stretch reads LKLGKPLGRG…FSELVEHLGN (329 aa). Residues 838–846 and K866 contribute to the ATP site; that span reads LGRGAFGQV. Phosphotyrosine; by autocatalysis is present on Y949. S980 and S982 each carry phosphoserine. Y994 is modified (phosphotyrosine; by autocatalysis). A disulfide bond links C1022 and C1043. The active-site Proton acceptor is D1026. 4 positions are modified to phosphotyrosine; by autocatalysis: Y1052, Y1057, Y1173, and Y1212. Phosphoserine occurs at positions 1229 and 1233. Phosphothreonine is present on T1236. The disordered stretch occupies residues 1272 to 1316; sequence DRNKLSPSFGGMMPSKSRESVASEGSNQTSGYQSGYHSDDTDTTV. The span at 1294 to 1307 shows a compositional bias: polar residues; sequence SEGSNQTSGYQSGY. Residues Y1303, Y1307, and Y1317 each carry the phosphotyrosine; by autocatalysis modification.

The protein belongs to the protein kinase superfamily. Tyr protein kinase family. CSF-1/PDGF receptor subfamily. In terms of assembly, homodimer in the presence of bound dimeric VEGFA, VEGFC or VEGFD ligands; monomeric in the absence of bound ligands. Can also form heterodimers with FLT1/VEGFR1 and KDR/VEGFR2. Interacts (tyrosine phosphorylated) with LFYN, NCK1, PLCG1. Interacts (tyrosine-phosphorylated active form preferentially) with DAB2IP (via C2 domain and active form preferentially); the interaction occurs at the late phase of VEGFA response and inhibits KDR/VEGFR2 activity. Interacts with SHBSH2D2A/TSAD, GRB2, MYOF, CBL and PDCD6. Interacts (via C-terminus domain) with ERN1 (via kinase domain); the interaction is facilitated in a XBP1 isoform 1- and vascular endothelial growth factor (VEGF)-dependent manner in endothelial cells. Interacts (via juxtamembrane region) with chaperone PDCL3 (via thioredoxin fold region); the interaction leads to increased KDR/VEGFR2 abundance through inhibition of its ubiquitination and degradation. Interacts (tyrosine phosphorylated) with CCDC88A/GIV (via SH2-like region); binding requires autophosphorylation of the KDR/VEGFR2 C-terminal region. Interacts with isoform 2 of BSG. Interacts with SLC31A1; this interaction is induced upon VEGFA stimulation leading to SLC31A1 and KDR subsequent co-internalization to early endosomes, thereby activating KDR downstream signaling in endothelial cells. N-glycosylated. Post-translationally, ubiquitinated. Tyrosine phosphorylation of the receptor promotes its poly-ubiquitination, leading to its degradation via the proteasome or lysosomal proteases. In terms of processing, autophosphorylated on tyrosine residues upon ligand binding. Autophosphorylation occurs in trans, i.e. one subunit of the dimeric receptor phosphorylates tyrosine residues on the other subunit. Phosphorylation at Tyr-949 is important for interaction with SH2D2A/TSAD and VEGFA-mediated reorganization of the actin cytoskeleton. Phosphorylation at Tyr-1173 is important for interaction with PLCG1 and SHB. Phosphorylation at Tyr-1212 is important for interaction with NCK1 and FYN. Dephosphorylated by PTPRJ at Tyr-799, Tyr-949, Tyr-994, Tyr-1052, Tyr-1057, Tyr-1173 and Tyr-1212. The inhibitory disulfide bond between Cys-1022 and Cys-1043 may serve as a specific molecular switch for H(2)S-induced modification that regulates KDR/VEGFR2 function. In terms of tissue distribution, expressed in endothelial cells (at protein level). Detected in embryonic endothelial cells, as well as hematopoietic stem and progenitor cells. Detected in vascular endothelium. Expressed at high levels in adult heart, lung, kidney, brain and skeletal muscle, but is also expressed at lower levels in most other adult tissues.

It localises to the cell junction. The protein localises to the endoplasmic reticulum. The protein resides in the cell membrane. It is found in the cytoplasm. Its subcellular location is the nucleus. It localises to the cytoplasmic vesicle. The protein localises to the early endosome. The protein resides in the secreted. The enzyme catalyses L-tyrosyl-[protein] + ATP = O-phospho-L-tyrosyl-[protein] + ADP + H(+). With respect to regulation, present in an inactive conformation in the absence of bound ligand. Binding of VEGFA, VEGFC or VEGFD leads to dimerization and activation by autophosphorylation on tyrosine residues. May be regulated by hydrogen sulfide (H(2)S) levels via a sensitive intracellular disulfide bond. In terms of biological role, tyrosine-protein kinase that acts as a cell-surface receptor for VEGFA, VEGFC and VEGFD. Plays an essential role in the regulation of angiogenesis, vascular development, vascular permeability, and embryonic hematopoiesis. Promotes proliferation, survival, migration and differentiation of endothelial cells. Promotes reorganization of the actin cytoskeleton. Isoforms lacking a transmembrane domain, such as isoform 2, may function as decoy receptors for VEGFA, VEGFC and/or VEGFD. Isoform 2 plays an important role as a negative regulator of VEGFA- and VEGFC-mediated lymphangiogenesis by limiting the amount of free VEGFA and/or VEGFC and by preventing their binding to FLT4. Modulates FLT1 and FLT4 signaling by forming heterodimers. Binding of vascular growth factors to isoform 1 leads to the activation of several signaling cascades. Activation of PLCG1 leads to the production of the cellular signaling molecules diacylglycerol and inositol 1,4,5-trisphosphate and the activation of protein kinase C. Mediates activation of MAPK1/ERK2, MAPK3/ERK1 and the MAP kinase signaling pathway, as well as of the AKT1 signaling pathway. Mediates phosphorylation of PIK3R1, the regulatory subunit of phosphatidylinositol 3-kinase, reorganization of the actin cytoskeleton and activation of PTK2/FAK1. Required for VEGFA-mediated induction of NOS2 and NOS3, leading to the production of the signaling molecule nitric oxide (NO) by endothelial cells. Phosphorylates PLCG1. Promotes phosphorylation of FYN, NCK1, NOS3, PIK3R1, PTK2/FAK1 and SRC. In Mus musculus (Mouse), this protein is Vascular endothelial growth factor receptor 2.